The sequence spans 276 residues: Bis(5'-nucleosyl)-tetraphosphatase, symmetrical (276 aa).

It belongs to the Ap4A hydrolase family.

It catalyses the reaction P(1),P(4)-bis(5'-adenosyl) tetraphosphate + H2O = 2 ADP + 2 H(+). Its function is as follows. Hydrolyzes diadenosine 5',5'''-P1,P4-tetraphosphate to yield ADP. The chain is Bis(5'-nucleosyl)-tetraphosphatase, symmetrical from Neisseria gonorrhoeae (strain ATCC 700825 / FA 1090).